The primary structure comprises 194 residues: Histone H1.0 (194 aa).

Residue Met1 is modified to N-acetylmethionine. The span at 1-11 shows a compositional bias: low complexity; it reads MTENSTSAPAA. Positions 1-28 are disordered; it reads MTENSTSAPAAKPKRAKASKKSTDHPKY. Thr2 is modified (N-acetylthreonine; in Histone H1.0, N-terminally processed). The region spanning 24 to 97 is the H15 domain; it reads DHPKYSDMIV…GASGSFRLAK (74 aa). Arg42 carries the citrulline modification. Residues 86 to 194 form a disordered region; sequence GVGASGSFRL…SSAKRASKKK (109 aa). Ser104 bears the ADP-ribosylserine mark. Basic residues predominate over residues 105-194; the sequence is VAFKKTKKEV…SSAKRASKKK (90 aa).

It belongs to the histone H1/H5 family. Post-translationally, ADP-ribosylated on Ser-104 in response to DNA damage.

The protein localises to the nucleus. The protein resides in the chromosome. Histones H1 are necessary for the condensation of nucleosome chains into higher-order structures. The histones H1.0 are found in cells that are in terminal stages of differentiation or that have low rates of cell division. The chain is Histone H1.0 (H1-0) from Mus musculus (Mouse).